Here is a 551-residue protein sequence, read N- to C-terminus: C6 finger transcription factor imqK (551 aa).

Positions 11–53 (CDRCRGQKLRCVRLPGPAREDSPRSARSVNQPCERCKRAKVVC) form a DNA-binding region, zn(2)-C6 fungal-type. Disordered stretches follow at residues 280–302 (RQGM…TSPS) and 351–378 (NEYS…RISA). Over residues 351–369 (NEYSSSRSQSRNHSTSASS) the composition is skewed to low complexity.

It is found in the nucleus. Functionally, C6 finger transcription factor that positively regulates the cluster that mediates the biosynthesis of imizoquins A to D, tripeptide-derived alkaloids that serve a protective role against oxidative stress that are essential for normal germination. The protein is C6 finger transcription factor imqK of Aspergillus flavus (strain ATCC 200026 / FGSC A1120 / IAM 13836 / NRRL 3357 / JCM 12722 / SRRC 167).